Reading from the N-terminus, the 661-residue chain is uncharacterized protein (661 aa).

Transmembrane regions (helical) follow at residues 27-47, 68-88, 116-136, 150-170, 179-199, 214-234, 251-271, 279-299, 313-333, 369-389, 396-416, 435-455, 488-508, 519-539, 552-572, and 599-619; these read LAIG…VSGA, VGFF…IHVV, LWLG…TGVG, VAAS…LVVA, WLGH…TAVT, AAIV…AAAL, GALA…GWAV, GLLA…RLLV, GAAL…VMTA, SLIG…FAAL, WPVG…FTSG, MTLN…TLAL, PITA…TPLF, EFMA…IIGI, IGLL…LMTM, and GGGI…VALV.

This sequence to M.leprae ML1998.

Its subcellular location is the cell membrane. This is an uncharacterized protein from Mycobacterium tuberculosis (strain CDC 1551 / Oshkosh).